We begin with the raw amino-acid sequence, 323 residues long: Prenyl transferase (323 aa).

The isopentenyl diphosphate site is built by K46, R49, and H81. D88 and D92 together coordinate Mg(2+). R97 contributes to the an all-trans-polyprenyl diphosphate binding site. R98 provides a ligand contact to isopentenyl diphosphate. Residues K174, T175, and Q212 each contribute to the an all-trans-polyprenyl diphosphate site.

It belongs to the FPP/GGPP synthase family. It depends on Mg(2+) as a cofactor.

It is found in the plastid. The protein resides in the chloroplast. Functionally, possible role in synthesis of the nonaprenyl side chain of plastoquinone or in synthesis of other prenyl chains such as undekaprenyl pyrophosphate. The polypeptide is Prenyl transferase (preA) (Cyanidium caldarium (Red alga)).